Reading from the N-terminus, the 435-residue chain is Adenylosuccinate synthetase (435 aa).

GTP is bound by residues 12-18 and 40-42; these read GDEGKGK and GHT. Aspartate 13 (proton acceptor) is an active-site residue. Residues aspartate 13 and glycine 40 each contribute to the Mg(2+) site. IMP contacts are provided by residues 13–16, 38–41, threonine 130, arginine 144, glutamine 224, threonine 239, and arginine 301; these read DEGK and NAGH. The active-site Proton donor is histidine 41. 297–303 serves as a coordination point for substrate; the sequence is TVSNRKR. GTP-binding positions include arginine 303, 329–331, and 411–413; these read KLD and SAG.

It belongs to the adenylosuccinate synthetase family. In terms of assembly, homodimer. It depends on Mg(2+) as a cofactor.

Its subcellular location is the cytoplasm. It catalyses the reaction IMP + L-aspartate + GTP = N(6)-(1,2-dicarboxyethyl)-AMP + GDP + phosphate + 2 H(+). It participates in purine metabolism; AMP biosynthesis via de novo pathway; AMP from IMP: step 1/2. Plays an important role in the de novo pathway of purine nucleotide biosynthesis. Catalyzes the first committed step in the biosynthesis of AMP from IMP. The chain is Adenylosuccinate synthetase from Wolbachia sp. subsp. Brugia malayi (strain TRS).